A 1352-amino-acid chain; its full sequence is DNA-directed RNA polymerase subunit beta (1352 aa).

Belongs to the RNA polymerase beta chain family. The RNAP catalytic core consists of 2 alpha, 1 beta, 1 beta' and 1 omega subunit. When a sigma factor is associated with the core the holoenzyme is formed, which can initiate transcription.

It catalyses the reaction RNA(n) + a ribonucleoside 5'-triphosphate = RNA(n+1) + diphosphate. In terms of biological role, DNA-dependent RNA polymerase catalyzes the transcription of DNA into RNA using the four ribonucleoside triphosphates as substrates. This is DNA-directed RNA polymerase subunit beta from Hydrogenovibrio crunogenus (strain DSM 25203 / XCL-2) (Thiomicrospira crunogena).